The chain runs to 224 residues: Cytidylate kinase (224 aa).

10 to 18 (GPASAGKST) is a binding site for ATP.

It belongs to the cytidylate kinase family. Type 1 subfamily.

The protein localises to the cytoplasm. The enzyme catalyses CMP + ATP = CDP + ADP. The catalysed reaction is dCMP + ATP = dCDP + ADP. This chain is Cytidylate kinase, found in Leuconostoc mesenteroides subsp. mesenteroides (strain ATCC 8293 / DSM 20343 / BCRC 11652 / CCM 1803 / JCM 6124 / NCDO 523 / NBRC 100496 / NCIMB 8023 / NCTC 12954 / NRRL B-1118 / 37Y).